Reading from the N-terminus, the 528-residue chain is Intestinal-type alkaline phosphatase (528 aa).

Positions Met-1 to Gly-19 are cleaved as a signal peptide. Residue Asp-61 coordinates Mg(2+). The Zn(2+) site is built by Asp-61 and Ser-111. Catalysis depends on Ser-111, which acts as the Phosphoserine intermediate. Residues Cys-140 and Cys-202 are joined by a disulfide bond. N-linked (GlcNAc...) asparagine glycosylation occurs at Asn-141. Mg(2+) is bound at residue Ser-174. Glu-235 contributes to the Ca(2+) binding site. Residue Asn-268 is glycosylated (N-linked (GlcNAc...) asparagine). The Ca(2+) site is built by Phe-288, Glu-289, and Asp-304. A Mg(2+)-binding site is contributed by Glu-330. Residues Asp-335, His-339, Asp-376, and His-377 each coordinate Zn(2+). Asn-429 carries an N-linked (GlcNAc...) asparagine glycan. His-451 serves as a coordination point for Zn(2+). Cysteines 486 and 493 form a disulfide. Asp-503 carries GPI-anchor amidated aspartate lipidation. Positions Ala-504 to Pro-528 are cleaved as a propeptide — removed in mature form.

Belongs to the alkaline phosphatase family. As to quaternary structure, homodimer. It depends on Mg(2+) as a cofactor. Zn(2+) is required as a cofactor. Requires Ca(2+) as cofactor.

Its subcellular location is the cell membrane. It carries out the reaction a phosphate monoester + H2O = an alcohol + phosphate. In terms of biological role, alkaline phosphatase that can hydrolyze various phosphate compounds. The protein is Intestinal-type alkaline phosphatase (ALPI) of Homo sapiens (Human).